Reading from the N-terminus, the 416-residue chain is Dihydrolipoyllysine-residue succinyltransferase component of 2-oxoglutarate dehydrogenase complex (416 aa).

Residues 3–78 form the Lipoyl-binding domain; sequence IVDVKVPQLS…VADEIIAKID (76 aa). Lys-44 is modified (N6-lipoyllysine). Positions 115–152 constitute a Peripheral subunit-binding (PSBD) domain; it reads VAMPSAAKLMAEAGLSAGQVAGTGKDGRITKGDALAAA. Residues His-387 and Asp-391 contribute to the active site.

The protein belongs to the 2-oxoacid dehydrogenase family. In terms of assembly, forms a 24-polypeptide structural core with octahedral symmetry. Part of the 2-oxoglutarate dehydrogenase (OGDH) complex composed of E1 (2-oxoglutarate dehydrogenase), E2 (dihydrolipoamide succinyltransferase) and E3 (dihydrolipoamide dehydrogenase); the complex contains multiple copies of the three enzymatic components (E1, E2 and E3). (R)-lipoate serves as cofactor.

It carries out the reaction N(6)-[(R)-dihydrolipoyl]-L-lysyl-[protein] + succinyl-CoA = N(6)-[(R)-S(8)-succinyldihydrolipoyl]-L-lysyl-[protein] + CoA. Its pathway is amino-acid degradation; L-lysine degradation via saccharopine pathway; glutaryl-CoA from L-lysine: step 6/6. Its function is as follows. E2 component of the 2-oxoglutarate dehydrogenase (OGDH) complex which catalyzes the second step in the conversion of 2-oxoglutarate to succinyl-CoA and CO(2). The sequence is that of Dihydrolipoyllysine-residue succinyltransferase component of 2-oxoglutarate dehydrogenase complex (sucB) from Cupriavidus necator (strain ATCC 17699 / DSM 428 / KCTC 22496 / NCIMB 10442 / H16 / Stanier 337) (Ralstonia eutropha).